The sequence spans 265 residues: MHELEVLLSRLKMEHLSYHVESLLEQAAKKELNYREFLCMALQQEWNGRHQRGMESRLKQARLPWVKTLEQFDFTFQPGIDRKVVRELAGLAFVERSENVILLGPPGVGKTHLAIALGVKAVDAGHRVLFMPLDRLIATLMKAKQENRLERQLQQLSYARVLILDEIGYLPMNREEASLFFRLLNRRYEKASIILTSNKGFADWGEMFGDHVLATAILDRLLHHSTTLNIKGESYRLKEKRKAGVLTKNTTPISDDEMVKSGQHQ.

104–111 (GPPGVGKT) lines the ATP pocket.

Belongs to the IS21/IS1162 putative ATP-binding protein family.

In terms of biological role, one of two proteins expressed only when there is a tandem repeat of the IS21 insertion sequence, it is necessary for the transposition of plasmids with that tandem repeat. The chain is Insertion sequence IS21 putative ATP-binding protein (istB) from Pseudomonas aeruginosa.